A 195-amino-acid polypeptide reads, in one-letter code: MRKVVLASASPRRKELLSKLIGNNFEVCVSSYEETPLQEMNVEELVVFHSLEKAKDVALRFDSGIIISADTVVFCDGAILGKPHTLNNAKEMLENISGKSVLAITGMTILDMDSGKCVSEYVSTDVNMKQMSSDEIASYVNSGEPLDKAGAFAIQGKGAVLVESINGDFFNVVGLPLFRLGTILEEMGISIFDDC.

Asp70 (proton acceptor) is an active-site residue.

Belongs to the Maf family. YhdE subfamily. Requires a divalent metal cation as cofactor.

Its subcellular location is the cytoplasm. The enzyme catalyses dTTP + H2O = dTMP + diphosphate + H(+). It carries out the reaction UTP + H2O = UMP + diphosphate + H(+). Functionally, nucleoside triphosphate pyrophosphatase that hydrolyzes dTTP and UTP. May have a dual role in cell division arrest and in preventing the incorporation of modified nucleotides into cellular nucleic acids. This chain is dTTP/UTP pyrophosphatase, found in Methanococcoides burtonii (strain DSM 6242 / NBRC 107633 / OCM 468 / ACE-M).